Here is a 212-residue protein sequence, read N- to C-terminus: Probable nicotinate-nucleotide adenylyltransferase (212 aa).

The protein belongs to the NadD family.

The catalysed reaction is nicotinate beta-D-ribonucleotide + ATP + H(+) = deamido-NAD(+) + diphosphate. It functions in the pathway cofactor biosynthesis; NAD(+) biosynthesis; deamido-NAD(+) from nicotinate D-ribonucleotide: step 1/1. Its function is as follows. Catalyzes the reversible adenylation of nicotinate mononucleotide (NaMN) to nicotinic acid adenine dinucleotide (NaAD). The chain is Probable nicotinate-nucleotide adenylyltransferase from Saccharopolyspora erythraea (strain ATCC 11635 / DSM 40517 / JCM 4748 / NBRC 13426 / NCIMB 8594 / NRRL 2338).